A 119-amino-acid polypeptide reads, in one-letter code: Thioredoxin H4 (119 aa).

Residues 2 to 115 (AAEEGQVIGC…LQAKIVKHTG (114 aa)) form the Thioredoxin domain. Active-site nucleophile residues include Cys-40 and Cys-43. Cys-40 and Cys-43 are joined by a disulfide.

Belongs to the thioredoxin family. Plant H-type subfamily. In terms of assembly, interacts with MDH1.

The protein localises to the cytoplasm. Its function is as follows. Thiol-disulfide oxidoreductase probably involved in the redox regulation of a number of cytosolic enzymes. Possesses insulin disulfide bonds reducing activity. This is Thioredoxin H4 (TRX4) from Arabidopsis thaliana (Mouse-ear cress).